Consider the following 194-residue polypeptide: Probable thymidylate kinase (194 aa).

9–16 lines the ATP pocket; sequence GIDGVGKS.

This sequence belongs to the thymidylate kinase family.

The catalysed reaction is dTMP + ATP = dTDP + ADP. This Methanopyrus kandleri (strain AV19 / DSM 6324 / JCM 9639 / NBRC 100938) protein is Probable thymidylate kinase.